The chain runs to 61 residues: Large ribosomal subunit protein uL30 (61 aa).

Belongs to the universal ribosomal protein uL30 family. As to quaternary structure, part of the 50S ribosomal subunit.

The protein is Large ribosomal subunit protein uL30 of Methylococcus capsulatus (strain ATCC 33009 / NCIMB 11132 / Bath).